Consider the following 84-residue polypeptide: Small ribosomal subunit protein uS17 (84 aa).

It belongs to the universal ribosomal protein uS17 family. As to quaternary structure, part of the 30S ribosomal subunit.

One of the primary rRNA binding proteins, it binds specifically to the 5'-end of 16S ribosomal RNA. The protein is Small ribosomal subunit protein uS17 of Photobacterium profundum (strain SS9).